A 477-amino-acid polypeptide reads, in one-letter code: Argininosuccinate lyase (477 aa).

Belongs to the lyase 1 family. Argininosuccinate lyase subfamily.

It localises to the cytoplasm. It carries out the reaction 2-(N(omega)-L-arginino)succinate = fumarate + L-arginine. The protein operates within amino-acid biosynthesis; L-arginine biosynthesis; L-arginine from L-ornithine and carbamoyl phosphate: step 3/3. This Streptomyces avermitilis (strain ATCC 31267 / DSM 46492 / JCM 5070 / NBRC 14893 / NCIMB 12804 / NRRL 8165 / MA-4680) protein is Argininosuccinate lyase.